A 273-amino-acid polypeptide reads, in one-letter code: Ribosomal RNA small subunit methyltransferase A (273 aa).

S-adenosyl-L-methionine contacts are provided by Asn-23, Ile-25, Gly-50, Glu-72, Asp-97, and Asn-116.

This sequence belongs to the class I-like SAM-binding methyltransferase superfamily. rRNA adenine N(6)-methyltransferase family. RsmA subfamily.

Its subcellular location is the cytoplasm. The catalysed reaction is adenosine(1518)/adenosine(1519) in 16S rRNA + 4 S-adenosyl-L-methionine = N(6)-dimethyladenosine(1518)/N(6)-dimethyladenosine(1519) in 16S rRNA + 4 S-adenosyl-L-homocysteine + 4 H(+). Functionally, specifically dimethylates two adjacent adenosines (A1518 and A1519) in the loop of a conserved hairpin near the 3'-end of 16S rRNA in the 30S particle. May play a critical role in biogenesis of 30S subunits. This Rickettsia akari (strain Hartford) protein is Ribosomal RNA small subunit methyltransferase A.